Consider the following 180-residue polypeptide: Large ribosomal subunit protein uL6 (180 aa).

The protein belongs to the universal ribosomal protein uL6 family. As to quaternary structure, part of the 50S ribosomal subunit.

Functionally, this protein binds to the 23S rRNA, and is important in its secondary structure. It is located near the subunit interface in the base of the L7/L12 stalk, and near the tRNA binding site of the peptidyltransferase center. This chain is Large ribosomal subunit protein uL6, found in Caldanaerobacter subterraneus subsp. tengcongensis (strain DSM 15242 / JCM 11007 / NBRC 100824 / MB4) (Thermoanaerobacter tengcongensis).